The following is a 149-amino-acid chain: Peptide deformylase (149 aa).

Cys92 and His134 together coordinate Fe cation. Residue Glu135 is part of the active site. Fe cation is bound at residue His138.

Belongs to the polypeptide deformylase family. Fe(2+) is required as a cofactor.

It carries out the reaction N-terminal N-formyl-L-methionyl-[peptide] + H2O = N-terminal L-methionyl-[peptide] + formate. Its function is as follows. Removes the formyl group from the N-terminal Met of newly synthesized proteins. Requires at least a dipeptide for an efficient rate of reaction. N-terminal L-methionine is a prerequisite for activity but the enzyme has broad specificity at other positions. This is Peptide deformylase from Buchnera aphidicola subsp. Cinara cedri (strain Cc).